Consider the following 157-residue polypeptide: AP-1 complex subunit sigma-2 (157 aa).

It belongs to the adaptor complexes small subunit family. As to quaternary structure, adaptor protein complex 1 (AP-1) is a heterotetramer composed of two large adaptins (gamma-type subunit AP1G1 and beta-type subunit AP1B1), a medium adaptin (mu-type subunit AP1M1 or AP1M2) and a small adaptin (sigma-type subunit AP1S1 or AP1S2 or AP1S3). Binds to MUC1. As to expression, widely expressed.

It localises to the golgi apparatus. Its subcellular location is the cytoplasmic vesicle membrane. It is found in the membrane. The protein resides in the clathrin-coated pit. Subunit of clathrin-associated adaptor protein complex 1 that plays a role in protein sorting in the late-Golgi/trans-Golgi network (TGN) and/or endosomes. The AP complexes mediate both the recruitment of clathrin to membranes and the recognition of sorting signals within the cytosolic tails of transmembrane cargo molecules. The polypeptide is AP-1 complex subunit sigma-2 (AP1S2) (Homo sapiens (Human)).